Here is a 747-residue protein sequence, read N- to C-terminus: Histone-lysine N-methyltransferase EZH1 (747 aa).

The tract at residues 186–229 (YSDEDEEGHNDTSDGKQDDSKEDLPVTRKRKRHAIEGSKKSSKK) is disordered. Residues 194 to 211 (HNDTSDGKQDDSKEDLPV) are compositionally biased toward basic and acidic residues. Lys-327 is covalently cross-linked (Glycyl lysine isopeptide (Lys-Gly) (interchain with G-Cter in SUMO2)). The tract at residues 375–421 (TSASAVAETKEGDSDRDTGNDWASSSSEANSRCQTPTKQKASPAPPQ) is disordered. Over residues 382–393 (ETKEGDSDRDTG) the composition is skewed to basic and acidic residues. Residues 395–414 (DWASSSSEANSRCQTPTKQK) show a composition bias toward polar residues. Residues 504 to 606 (CRKIQLKKDN…CKVVSCKNCS (103 aa)) form the CXC domain. Residues 613 to 728 (KHLLLAPSDV…AGEELFFDYR (116 aa)) enclose the SET domain.

It belongs to the class V-like SAM-binding methyltransferase superfamily. Histone-lysine methyltransferase family. EZ subfamily. In terms of assembly, component of the PRC2/EED-EZH1 complex, which includes EED, EZH1, SUZ12, RBBP4 and AEBP2. The PRC2/EED-EZH1 is less abundant than the PRC2/EED-EZH2 complex, has weak methyltransferase activity and compacts chromatin in the absence of the methyltransferase cofactor S-adenosyl-L-methionine (SAM). Interacts with EZHIP; the interaction blocks EZH1 methyltransferase activity.

Its subcellular location is the nucleus. The enzyme catalyses L-lysyl(27)-[histone H3] + 3 S-adenosyl-L-methionine = N(6),N(6),N(6)-trimethyl-L-lysyl(27)-[histone H3] + 3 S-adenosyl-L-homocysteine + 3 H(+). Polycomb group (PcG) protein. Catalytic subunit of the PRC2/EED-EZH1 complex, which methylates 'Lys-27' of histone H3, leading to transcriptional repression of the affected target gene. Able to mono-, di- and trimethylate 'Lys-27' of histone H3 to form H3K27me1, H3K27me2 and H3K27me3, respectively. Required for embryonic stem cell derivation and self-renewal, suggesting that it is involved in safeguarding embryonic stem cell identity. Compared to EZH2-containing complexes, it is less abundant in embryonic stem cells, has weak methyltransferase activity and plays a less critical role in forming H3K27me3, which is required for embryonic stem cell identity and proper differentiation. The chain is Histone-lysine N-methyltransferase EZH1 (EZH1) from Bos taurus (Bovine).